The following is a 109-amino-acid chain: Ig kappa chain V region S211 (109 aa).

The tract at residues 1–23 (DVQMTQSPSYLAASPGESVSISC) is framework-1. The segment at 24–35 (KASNKSISNNLA) is complementarity-determining-1. A framework-2 region spans residues 36–50 (WYZZKPGKANKLLIS). The tract at residues 51–57 (SGSTLQS) is complementarity-determining-2. Residues 58-89 (GTPSRFSGSGSDTDFTLTIRSLEFQDFAVYYC) form a framework-3 region. The interval 90-98 (ZZYNEPYYT) is complementarity-determining-3. The interval 99 to 108 (FGAGTMLELK) is framework-4.

This chain is Ig kappa chain V region S211, found in Rattus norvegicus (Rat).